The following is a 159-amino-acid chain: Ribosome maturation factor RimP (159 aa).

Belongs to the RimP family.

It is found in the cytoplasm. Functionally, required for maturation of 30S ribosomal subunits. This is Ribosome maturation factor RimP from Geobacter metallireducens (strain ATCC 53774 / DSM 7210 / GS-15).